The primary structure comprises 90 residues: uncharacterized protein (90 aa).

The N-terminal stretch at 1-20 is a signal peptide; the sequence is MEKLFVLVFALALLAFSSDA.

It localises to the secreted. This is an uncharacterized protein from Mus musculus (Mouse).